A 404-amino-acid polypeptide reads, in one-letter code: Phosphopentomutase (404 aa).

Mn(2+) contacts are provided by Asp-10, Asp-297, His-302, Asp-338, His-339, and His-350.

The protein belongs to the phosphopentomutase family. Mn(2+) serves as cofactor.

Its subcellular location is the cytoplasm. It catalyses the reaction 2-deoxy-alpha-D-ribose 1-phosphate = 2-deoxy-D-ribose 5-phosphate. It carries out the reaction alpha-D-ribose 1-phosphate = D-ribose 5-phosphate. Its pathway is carbohydrate degradation; 2-deoxy-D-ribose 1-phosphate degradation; D-glyceraldehyde 3-phosphate and acetaldehyde from 2-deoxy-alpha-D-ribose 1-phosphate: step 1/2. Isomerase that catalyzes the conversion of deoxy-ribose 1-phosphate (dRib-1-P) and ribose 1-phosphate (Rib-1-P) to deoxy-ribose 5-phosphate (dRib-5-P) and ribose 5-phosphate (Rib-5-P), respectively. This Colwellia psychrerythraea (strain 34H / ATCC BAA-681) (Vibrio psychroerythus) protein is Phosphopentomutase.